We begin with the raw amino-acid sequence, 460 residues long: tRNA(Ile)-lysidine synthase (460 aa).

An ATP-binding site is contributed by 30–35; the sequence is SGGLDS.

This sequence belongs to the tRNA(Ile)-lysidine synthase family.

It localises to the cytoplasm. It catalyses the reaction cytidine(34) in tRNA(Ile2) + L-lysine + ATP = lysidine(34) in tRNA(Ile2) + AMP + diphosphate + H(+). Its function is as follows. Ligates lysine onto the cytidine present at position 34 of the AUA codon-specific tRNA(Ile) that contains the anticodon CAU, in an ATP-dependent manner. Cytidine is converted to lysidine, thus changing the amino acid specificity of the tRNA from methionine to isoleucine. The chain is tRNA(Ile)-lysidine synthase from Yersinia pseudotuberculosis serotype I (strain IP32953).